Consider the following 276-residue polypeptide: Large ribosomal subunit protein uL2 (276 aa).

Disordered regions lie at residues 1–20 and 219–276; these read MGIK…TTND and TVRG…RRKK. Over residues 7 to 20 the composition is skewed to polar residues; sequence NPTTNGRRNMTTND.

Belongs to the universal ribosomal protein uL2 family. Part of the 50S ribosomal subunit. Forms a bridge to the 30S subunit in the 70S ribosome.

One of the primary rRNA binding proteins. Required for association of the 30S and 50S subunits to form the 70S ribosome, for tRNA binding and peptide bond formation. It has been suggested to have peptidyltransferase activity; this is somewhat controversial. Makes several contacts with the 16S rRNA in the 70S ribosome. The polypeptide is Large ribosomal subunit protein uL2 (Bacillus cereus (strain G9842)).